A 253-amino-acid chain; its full sequence is Probable transcriptional regulatory protein RC0681 (253 aa).

The disordered stretch occupies residues 1–21 (MAGHSKFKNIQHRKGAQDKKR).

Belongs to the TACO1 family.

It localises to the cytoplasm. The sequence is that of Probable transcriptional regulatory protein RC0681 from Rickettsia conorii (strain ATCC VR-613 / Malish 7).